The chain runs to 196 residues: Rac-like GTP-binding protein ARAC5 (196 aa).

GTP is bound at residue 16-21; it reads AVGKTC. Residues 35-43 carry the Effector region motif; sequence YVPTVFDNF. Residues 119-121 and 159-161 each bind GTP; these read KLD and SSK. Position 193 is a cysteine methyl ester (Cys193). Residue Cys193 is the site of S-geranylgeranyl cysteine attachment. The propeptide at 194-196 is removed in mature form; it reads VFL.

Belongs to the small GTPase superfamily. Rho family. Interacts with GDI1 and ROPGEF8 homodimer. Binds to SPK1. In terms of tissue distribution, ubiquitous. Preferentially expressed at the tip of root hairs.

The protein resides in the cytoplasm. It is found in the membrane. The protein localises to the cell membrane. In terms of biological role, involved in cell polarity control during the actin-dependent tip growth of root hairs, thus regulating root hair length and root hair initiation. Inactive GDP-bound Rho GTPases reside in the cytosol, are found in a complex with Rho GDP-dissociation inhibitors (Rho GDIs), and are released from the GDI protein in order to translocate to membranes upon activation. This Arabidopsis thaliana (Mouse-ear cress) protein is Rac-like GTP-binding protein ARAC5.